A 515-amino-acid polypeptide reads, in one-letter code: Anthranilate synthase component 1 (515 aa).

L-tryptophan is bound by residues Ser-50 and 281–283 (PYM). Residue 316–317 (GT) coordinates chorismate. Glu-343 is a binding site for Mg(2+). Residues Tyr-431, Arg-451, 465 to 467 (GAG), and Gly-467 contribute to the chorismate site. Glu-480 lines the Mg(2+) pocket.

Belongs to the anthranilate synthase component I family. Heterotetramer consisting of two non-identical subunits: a beta subunit (TrpG) and a large alpha subunit (TrpE). Mg(2+) serves as cofactor.

It catalyses the reaction chorismate + L-glutamine = anthranilate + pyruvate + L-glutamate + H(+). Its pathway is amino-acid biosynthesis; L-tryptophan biosynthesis; L-tryptophan from chorismate: step 1/5. Feedback inhibited by tryptophan. Its function is as follows. Part of a heterotetrameric complex that catalyzes the two-step biosynthesis of anthranilate, an intermediate in the biosynthesis of L-tryptophan. In the first step, the glutamine-binding beta subunit (TrpG) of anthranilate synthase (AS) provides the glutamine amidotransferase activity which generates ammonia as a substrate that, along with chorismate, is used in the second step, catalyzed by the large alpha subunit of AS (TrpE) to produce anthranilate. In the absence of TrpG, TrpE can synthesize anthranilate directly from chorismate and high concentrations of ammonia. This is Anthranilate synthase component 1 (trpE) from Bacillus subtilis (strain 168).